The sequence spans 475 residues: Sulfate adenylyltransferase subunit 1 (475 aa).

Positions 25–239 constitute a tr-type G domain; sequence KSLLRFLTCG…EVLETVEIQR (215 aa). The segment at 34 to 41 is G1; the sequence is GSVDDGKS. 34–41 provides a ligand contact to GTP; it reads GSVDDGKS. The interval 92-96 is G2; that stretch reads GITID. A G3 region spans residues 113–116; sequence DTPG. GTP is bound by residues 113–117 and 168–171; these read DTPGH and NKMD. The G4 stretch occupies residues 168–171; it reads NKMD. A G5 region spans residues 206 to 208; it reads SAL.

Belongs to the TRAFAC class translation factor GTPase superfamily. Classic translation factor GTPase family. CysN/NodQ subfamily. In terms of assembly, heterodimer composed of CysD, the smaller subunit, and CysN.

The enzyme catalyses sulfate + ATP + H(+) = adenosine 5'-phosphosulfate + diphosphate. It functions in the pathway sulfur metabolism; hydrogen sulfide biosynthesis; sulfite from sulfate: step 1/3. Functionally, with CysD forms the ATP sulfurylase (ATPS) that catalyzes the adenylation of sulfate producing adenosine 5'-phosphosulfate (APS) and diphosphate, the first enzymatic step in sulfur assimilation pathway. APS synthesis involves the formation of a high-energy phosphoric-sulfuric acid anhydride bond driven by GTP hydrolysis by CysN coupled to ATP hydrolysis by CysD. The chain is Sulfate adenylyltransferase subunit 1 from Citrobacter koseri (strain ATCC BAA-895 / CDC 4225-83 / SGSC4696).